The sequence spans 125 residues: Holo-[acyl-carrier-protein] synthase (125 aa).

Mg(2+) is bound by residues glutamate 9 and glutamine 58.

The protein belongs to the P-Pant transferase superfamily. AcpS family. Requires Mg(2+) as cofactor.

Its subcellular location is the cytoplasm. The enzyme catalyses apo-[ACP] + CoA = holo-[ACP] + adenosine 3',5'-bisphosphate + H(+). In terms of biological role, transfers the 4'-phosphopantetheine moiety from coenzyme A to a Ser of acyl-carrier-protein. This chain is Holo-[acyl-carrier-protein] synthase, found in Rhodopirellula baltica (strain DSM 10527 / NCIMB 13988 / SH1).